A 379-amino-acid chain; its full sequence is 3-dehydroquinate synthase (379 aa).

Residues 67-72 (PGEKNK), 101-105 (GIVLD), 125-126 (TT), K138, and K147 contribute to the NAD(+) site. E180, H242, and H258 together coordinate Zn(2+).

It belongs to the sugar phosphate cyclases superfamily. Dehydroquinate synthase family. NAD(+) serves as cofactor. Co(2+) is required as a cofactor. The cofactor is Zn(2+).

It is found in the cytoplasm. It catalyses the reaction 7-phospho-2-dehydro-3-deoxy-D-arabino-heptonate = 3-dehydroquinate + phosphate. It functions in the pathway metabolic intermediate biosynthesis; chorismate biosynthesis; chorismate from D-erythrose 4-phosphate and phosphoenolpyruvate: step 2/7. In terms of biological role, catalyzes the conversion of 3-deoxy-D-arabino-heptulosonate 7-phosphate (DAHP) to dehydroquinate (DHQ). The sequence is that of 3-dehydroquinate synthase from Chlamydia felis (strain Fe/C-56) (Chlamydophila felis).